Consider the following 175-residue polypeptide: Bifunctional protein PyrR (175 aa).

Substrate contacts are provided by residues 40–41 (TR), 102–110 (DDVLYTGRT), Arg135, and Val159. Residues 98 to 110 (VIIIDDVLYTGRT) carry the PRPP-binding motif.

This sequence belongs to the purine/pyrimidine phosphoribosyltransferase family. PyrR subfamily. As to quaternary structure, homodimer and homohexamer; in equilibrium.

The catalysed reaction is UMP + diphosphate = 5-phospho-alpha-D-ribose 1-diphosphate + uracil. Functionally, regulates transcriptional attenuation of the pyrimidine nucleotide (pyr) operon by binding in a uridine-dependent manner to specific sites on pyr mRNA. This disrupts an antiterminator hairpin in the RNA and favors formation of a downstream transcription terminator, leading to a reduced expression of downstream genes. In terms of biological role, also displays a weak uracil phosphoribosyltransferase activity which is not physiologically significant. The protein is Bifunctional protein PyrR of Staphylococcus haemolyticus (strain JCSC1435).